The following is a 344-amino-acid chain: Acireductone dioxygenase (344 aa).

4 residues coordinate Fe(2+): His-92, His-94, Glu-98, and His-137. The Ni(2+) site is built by His-92, His-94, Glu-98, and His-137.

It belongs to the acireductone dioxygenase (ARD) family. Fe(2+) serves as cofactor. Ni(2+) is required as a cofactor.

It localises to the cytoplasm. The protein resides in the nucleus. The enzyme catalyses 1,2-dihydroxy-5-(methylsulfanyl)pent-1-en-3-one + O2 = 4-methylsulfanyl-2-oxobutanoate + formate + 2 H(+). The catalysed reaction is 1,2-dihydroxy-5-(methylsulfanyl)pent-1-en-3-one + O2 = 3-(methylsulfanyl)propanoate + CO + formate + 2 H(+). Its pathway is amino-acid biosynthesis; L-methionine biosynthesis via salvage pathway; L-methionine from S-methyl-5-thio-alpha-D-ribose 1-phosphate: step 5/6. Catalyzes 2 different reactions between oxygen and the acireductone 1,2-dihydroxy-3-keto-5-methylthiopentene (DHK-MTPene) depending upon the metal bound in the active site. Fe-containing acireductone dioxygenase (Fe-ARD) produces formate and 2-keto-4-methylthiobutyrate (KMTB), the alpha-ketoacid precursor of methionine in the methionine recycle pathway. Ni-containing acireductone dioxygenase (Ni-ARD) produces methylthiopropionate, carbon monoxide and formate, and does not lie on the methionine recycle pathway. The polypeptide is Acireductone dioxygenase (Leishmania infantum).